The chain runs to 409 residues: MQVTLKTLQQQTFKIDIDPEETVKALKEKIESEKGKDAFPVAGQKLIYAGKILNDDTALKEYKIDEKNFVVVMVTKPKAVSTPAPATTQQSAPASTTAVTSSTTTTVAQAPTPVPALAPTSTPASITPASATASSEPAPASAAKQEKPAEKPAETPVATSPTATDSTSGDSSRSNLFEDATSALVTGQSYENMVTEIMSMGYEREQVIAALRASFNNPDRAVEYLLMGIPGDRESQAVVDPPQAASTGAPQSSAVAAAAATTTATTTTTSSGGHPLEFLRNQPQFQQMRQIIQQNPSLLPALLQQIGRENPQLLQQISQHQEHFIQMLNEPVQEAGGQGGGGGGGSGGIAEAGSGHMNYIQVTPQEKEAIERLKALGFPEGLVIQAYFACEKNENLAANFLLQQNFDED.

A Ubiquitin-like domain is found at 1 to 79; sequence MQVTLKTLQQ…VVVMVTKPKA (79 aa). Positions 80–175 are disordered; the sequence is VSTPAPATTQ…STSGDSSRSN (96 aa). The segment covering 81-143 has biased composition (low complexity); it reads STPAPATTQQ…SSEPAPASAA (63 aa). Residues 144–153 show a composition bias toward basic and acidic residues; the sequence is KQEKPAEKPA. Thr-155 carries the post-translational modification Phosphothreonine. Ser-160 carries the post-translational modification Phosphoserine. Positions 160-175 are enriched in polar residues; the sequence is SPTATDSTSGDSSRSN. Thr-164 carries the phosphothreonine modification. Ser-174 is modified (phosphoserine). Thr-186 bears the Phosphothreonine mark. The region spanning 188–228 is the UBA 1 domain; that stretch reads QSYENMVTEIMSMGYEREQVIAALRASFNNPDRAVEYLLMG. Residue Ser-199 is modified to Phosphoserine. At Tyr-202 the chain carries Phosphotyrosine. A disordered region spans residues 236–276; sequence QAVVDPPQAASTGAPQSSAVAAAAATTTATTTTTSSGGHPL. Low complexity predominate over residues 252–271; sequence SSAVAAAAATTTATTTTTSS. The STI1 domain maps to 274–317; sequence HPLEFLRNQPQFQQMRQIIQQNPSLLPALLQQIGRENPQLLQQI. A UBA 2 domain is found at 364 to 404; sequence PQEKEAIERLKALGFPEGLVIQAYFACEKNENLAANFLLQQ.

It belongs to the RAD23 family. Component of the XPC complex composed of XPC, RAD23B and CETN2. Interacts with NGLY1 and PSMC1. Interacts with ATXN3. Interacts with PSMD4 and PSMC5. Interacts with AMFR. Interacts with VCP; the interaction is indirect and mediated by NGLY1.

The protein resides in the nucleus. Its subcellular location is the cytoplasm. Its function is as follows. Multiubiquitin chain receptor involved in modulation of proteasomal degradation. Binds to polyubiquitin chains. Proposed to be capable to bind simultaneously to the 26S proteasome and to polyubiquitinated substrates and to deliver ubiquitinated proteins to the proteasome. May play a role in endoplasmic reticulum-associated degradation (ERAD) of misfolded glycoproteins by association with PNGase and delivering deglycosylated proteins to the proteasome. In terms of biological role, involved in global genome nucleotide excision repair (GG-NER) by acting as component of the XPC complex. Cooperatively with CETN2 appears to stabilize XPC. May protect XPC from proteasomal degradation. The XPC complex is proposed to represent the first factor bound at the sites of DNA damage and together with other core recognition factors, XPA, RPA and the TFIIH complex, is part of the pre-incision (or initial recognition) complex. The XPC complex recognizes a wide spectrum of damaged DNA characterized by distortions of the DNA helix such as single-stranded loops, mismatched bubbles or single-stranded overhangs. The orientation of XPC complex binding appears to be crucial for inducing a productive NER. XPC complex is proposed to recognize and to interact with unpaired bases on the undamaged DNA strand which is followed by recruitment of the TFIIH complex and subsequent scanning for lesions in the opposite strand in a 5'-to-3' direction by the NER machinery. Cyclobutane pyrimidine dimers (CPDs) which are formed upon UV-induced DNA damage esacpe detection by the XPC complex due to a low degree of structural perurbation. Instead they are detected by the UV-DDB complex which in turn recruits and cooperates with the XPC complex in the respective DNA repair. In vitro, the XPC:RAD23B dimer is sufficient to initiate NER; it preferentially binds to cisplatin and UV-damaged double-stranded DNA and also binds to a variety of chemically and structurally diverse DNA adducts. XPC:RAD23B contacts DNA both 5' and 3' of a cisplatin lesion with a preference for the 5' side. XPC:RAD23B induces a bend in DNA upon binding. XPC:RAD23B stimulates the activity of DNA glycosylases TDG and SMUG1. The chain is UV excision repair protein RAD23 homolog B (RAD23B) from Homo sapiens (Human).